The primary structure comprises 494 residues: Integrin beta-like protein 1 (494 aa).

The signal sequence occupies residues 1–23; that stretch reads MRPPGFRNFLLLASSLLFAGLSA. Cystine bridges form between Cys-40/Cys-71, Cys-51/Cys-69, Cys-63/Cys-74, Cys-76/Cys-89, Cys-91/Cys-112, Cys-96/Cys-110, Cys-104/Cys-115, Cys-117/Cys-126, Cys-132/Cys-159, Cys-143/Cys-157, Cys-151/Cys-162, Cys-164/Cys-178, Cys-180/Cys-202, Cys-185/Cys-200, Cys-194/Cys-205, Cys-207/Cys-216, Cys-220/Cys-247, Cys-231/Cys-245, Cys-239/Cys-250, Cys-252/Cys-269, Cys-271/Cys-296, Cys-276/Cys-294, Cys-288/Cys-299, Cys-301/Cys-310, Cys-316/Cys-343, Cys-327/Cys-341, Cys-335/Cys-346, Cys-348/Cys-361, Cys-363/Cys-384, Cys-368/Cys-382, Cys-376/Cys-387, Cys-389/Cys-398, Cys-404/Cys-431, Cys-415/Cys-429, Cys-423/Cys-434, Cys-436/Cys-448, Cys-450/Cys-471, Cys-455/Cys-469, Cys-463/Cys-474, and Cys-476/Cys-485. 10 consecutive I-EGF domains span residues 40-90, 91-127, 132-179, 180-217, 220-270, 271-311, 316-362, 363-399, 404-449, and 450-486; these read CRLS…PLCE, CHEW…DACQ, CDLT…KFCE, CDDR…DKCE, CDIT…DTCE, CDER…KKCE, CTLS…KTCE, CDDR…KLCQ, CNMT…EFCD, and CDDR…NACE. The I repeat unit spans residues 51-95; it reads CRAPGQPPGAALCHGRGRCDCGVCICHVTEPGMFFGPLCECHEWV. Residues 51–494 are cysteine-rich tandem repeats; it reads CRAPGQPPGA…CEIWLGSEYP (444 aa). One copy of the II repeat lies at 96-142; sequence CETYDGSTCAGHGKCDCGKCKCDQGWYGDACQYPTNCDLTKKKSNQM. The stretch at 143 to 184 is one III repeat; it reads CKNSQDIICSNAGTCHCGRCKCDNSDGSGLVYGKFCECDDRE. The IV repeat unit spans residues 185-230; sequence CIDDETEEICGGHGKCYCGNCYCKAGWHGDKCEFQCDITPWESKRR. A V repeat occupies 231–275; the sequence is CTSPDGKICSNRGTCVCGECTCHDVDPTGDWGDIHGDTCECDERD. A VI repeat occupies 276-326; the sequence is CRAVYDRYSDDFCSGHGQCNCGRCDCKAGWYGKKCEHPQSCTLSAEESIRK. The stretch at 327–367 is one VII repeat; sequence CQGSSDLPCSGRGKCECGKCTCYPPGDRRVYGKTCECDDRR. The VIII repeat unit spans residues 368–414; the sequence is CEDLDGVVCGGHGTCSCGRCVCERGWFGKLCQHPRKCNMTEEQSKNL. A glycan (N-linked (GlcNAc...) asparagine) is linked at Asn-405. An IX repeat occupies 415–454; it reads CESADGILCSGKGSCHCGKCICSAEEWYISGEFCDCDDRD. A X repeat occupies 455 to 494; the sequence is CDKHDGLICTGNGICSCGNCECWDGWNGNACEIWLGSEYP.

Widely expressed in many tissues, but readily detectable only in aorta.

It localises to the secreted. This Homo sapiens (Human) protein is Integrin beta-like protein 1 (ITGBL1).